A 111-amino-acid chain; its full sequence is Large ribosomal subunit protein uL22 (111 aa).

Belongs to the universal ribosomal protein uL22 family. Part of the 50S ribosomal subunit.

Its function is as follows. This protein binds specifically to 23S rRNA; its binding is stimulated by other ribosomal proteins, e.g. L4, L17, and L20. It is important during the early stages of 50S assembly. It makes multiple contacts with different domains of the 23S rRNA in the assembled 50S subunit and ribosome. In terms of biological role, the globular domain of the protein is located near the polypeptide exit tunnel on the outside of the subunit, while an extended beta-hairpin is found that lines the wall of the exit tunnel in the center of the 70S ribosome. The polypeptide is Large ribosomal subunit protein uL22 (Clostridium tetani (strain Massachusetts / E88)).